A 395-amino-acid polypeptide reads, in one-letter code: Tryptophan--tRNA ligase, cytoplasmic (395 aa).

The 'HIGH' region motif lies at 91 to 100 (PSSDSMHLGH). The 'KMSKS' region signature appears at 275–279 (KMSAS). A phosphothreonine mark is found at T288 and T290.

Belongs to the class-I aminoacyl-tRNA synthetase family.

The protein resides in the cytoplasm. It catalyses the reaction tRNA(Trp) + L-tryptophan + ATP = L-tryptophyl-tRNA(Trp) + AMP + diphosphate + H(+). This is Tryptophan--tRNA ligase, cytoplasmic (wrs1) from Schizosaccharomyces pombe (strain 972 / ATCC 24843) (Fission yeast).